The primary structure comprises 627 residues: F-box only protein 21 (627 aa).

Positions 27 to 76 (PSCLVQLPGEVLEYILCSGSLTALDIGRVSSTCRRLREVCQSSGQVWKEQ) constitute an F-box domain.

Directly interacts with SKP1 and CUL1.

Substrate-recognition component of the SCF (SKP1-CUL1-F-box protein)-type E3 ubiquitin ligase complex. The polypeptide is F-box only protein 21 (Fbxo21) (Mus musculus (Mouse)).